Here is a 67-residue protein sequence, read N- to C-terminus: Putative ATP synthase subunit epsilon, mitochondrial (67 aa).

It belongs to the eukaryotic ATPase epsilon family. As to quaternary structure, F-type ATPases have 2 components, CF(1) - the catalytic core - and CF(0) - the membrane proton channel. CF(1) has five subunits: alpha(3), beta(3), gamma(1), delta(1), epsilon(1). CF(0) seems to have nine subunits: a, b, c, d, e, f, g, F6 and 8 (or A6L).

The protein resides in the mitochondrion. Its subcellular location is the mitochondrion inner membrane. Its function is as follows. Mitochondrial membrane ATP synthase (F(1)F(0) ATP synthase or Complex V) produces ATP from ADP in the presence of a proton gradient across the membrane which is generated by electron transport complexes of the respiratory chain. F-type ATPases consist of two structural domains, F(1) - containing the extramembraneous catalytic core, and F(0) - containing the membrane proton channel, linked together by a central stalk and a peripheral stalk. During catalysis, ATP synthesis in the catalytic domain of F(1) is coupled via a rotary mechanism of the central stalk subunits to proton translocation. Part of the complex F(1) domain and of the central stalk which is part of the complex rotary element. Rotation of the central stalk against the surrounding alpha(3)beta(3) subunits leads to hydrolysis of ATP in three separate catalytic sites on the beta subunits. The sequence is that of Putative ATP synthase subunit epsilon, mitochondrial (atp15) from Schizosaccharomyces pombe (strain 972 / ATCC 24843) (Fission yeast).